A 485-amino-acid chain; its full sequence is tRNA sulfurtransferase (485 aa).

The region spanning 63–167 is the THUMP domain; it reads ERYAERLACI…NEHLYLVEKR (105 aa). ATP-binding positions include 185–186, Lys-267, Gly-289, and Gln-298; that span reads LI. Residues Cys-346 and Cys-458 are joined by a disulfide bond. The region spanning 406 to 484 is the Rhodanese domain; it reads VSGGEVVVDI…GYHNVKVYRP (79 aa). The active-site Cysteine persulfide intermediate is the Cys-458.

Belongs to the ThiI family.

It is found in the cytoplasm. It carries out the reaction [ThiI sulfur-carrier protein]-S-sulfanyl-L-cysteine + a uridine in tRNA + 2 reduced [2Fe-2S]-[ferredoxin] + ATP + H(+) = [ThiI sulfur-carrier protein]-L-cysteine + a 4-thiouridine in tRNA + 2 oxidized [2Fe-2S]-[ferredoxin] + AMP + diphosphate. The enzyme catalyses [ThiS sulfur-carrier protein]-C-terminal Gly-Gly-AMP + S-sulfanyl-L-cysteinyl-[cysteine desulfurase] + AH2 = [ThiS sulfur-carrier protein]-C-terminal-Gly-aminoethanethioate + L-cysteinyl-[cysteine desulfurase] + A + AMP + 2 H(+). It functions in the pathway cofactor biosynthesis; thiamine diphosphate biosynthesis. Functionally, catalyzes the ATP-dependent transfer of a sulfur to tRNA to produce 4-thiouridine in position 8 of tRNAs, which functions as a near-UV photosensor. Also catalyzes the transfer of sulfur to the sulfur carrier protein ThiS, forming ThiS-thiocarboxylate. This is a step in the synthesis of thiazole, in the thiamine biosynthesis pathway. The sulfur is donated as persulfide by IscS. The sequence is that of tRNA sulfurtransferase from Shewanella loihica (strain ATCC BAA-1088 / PV-4).